The primary structure comprises 704 residues: MQDERPVDQLTEAEAAAELARLAEAIEAANTAYHTHDAPQISDADYDALKVRNRAIEEQFPELRRSDSPSDRVGGALAEGFAKVRHDVRMLSLENAFDLAEVEDWIERIRRYLGHVGDLLFTAEPKIDGLSLSLRYEKGRLVQAATRGDGETGENVTENARTIADLPTELDGAPDLLEVRGEVYMSHEDFAALNGRQEAAGQRLFANPRNAAAGSLRQLDPAVTASRPLRFFAYAWGAHSEPLAATQHEAIARLAALGFATNPLTRLCTGPEELLAQHAQIERQRAALGYDIDGVVYKVDDLALQRRLGFRASTPRWAIAHKFAAQLAWTQLEGIDIQVGRTGALSPVARLKPVTVGGVVVANATLHNEDYIAGRDSKGQEIRGGKDIRVGDWVQVYRAGDVIPKVADVDLDRRPEGAAPYRFPETCPECGSEAIREPGDSVRRCTGGLICPAQQVERLKHFVSRAAFDIEGLGAKQVEALWRDGWIRQPADIFELPNRYRDGMQRLENREGWGRKSAENLFAAIEARRRIALHRLIFALGIRHVGETTATLLATHYGSWAAFEAAMTRAEVGAGPEWQDLLSIDGVGAVLATSLVTAFHQEAERAAVDALAAHLTVEDAEVRAPVASPVAGKIVVFTGTLEKMSRAEAKARAEALGAKVSGSVSARTDLVVAGPGAGSKAKQAAALGIETIDEDGWLRLIGDA.

NAD(+) contacts are provided by residues 43–47 (DADYD), 92–93 (SL), and E124. The N6-AMP-lysine intermediate role is filled by K126. Residues R147, E182, K298, and K322 each coordinate NAD(+). Residues C427, C430, C445, and C451 each contribute to the Zn(2+) site. Residues 625–704 (PVASPVAGKI…DGWLRLIGDA (80 aa)) enclose the BRCT domain.

The protein belongs to the NAD-dependent DNA ligase family. LigA subfamily. Mg(2+) serves as cofactor. Requires Mn(2+) as cofactor.

It carries out the reaction NAD(+) + (deoxyribonucleotide)n-3'-hydroxyl + 5'-phospho-(deoxyribonucleotide)m = (deoxyribonucleotide)n+m + AMP + beta-nicotinamide D-nucleotide.. DNA ligase that catalyzes the formation of phosphodiester linkages between 5'-phosphoryl and 3'-hydroxyl groups in double-stranded DNA using NAD as a coenzyme and as the energy source for the reaction. It is essential for DNA replication and repair of damaged DNA. The chain is DNA ligase from Cereibacter sphaeroides (strain ATCC 17023 / DSM 158 / JCM 6121 / CCUG 31486 / LMG 2827 / NBRC 12203 / NCIMB 8253 / ATH 2.4.1.) (Rhodobacter sphaeroides).